Consider the following 278-residue polypeptide: Diaminopimelate epimerase (278 aa).

Substrate contacts are provided by asparagine 13, glutamine 49, and asparagine 68. The Proton donor role is filled by cysteine 77. Substrate-binding positions include 78 to 79, asparagine 161, asparagine 194, and 212 to 213; these read GN and ER. Cysteine 221 functions as the Proton acceptor in the catalytic mechanism. Position 222 to 223 (222 to 223) interacts with substrate; it reads GT.

The protein belongs to the diaminopimelate epimerase family. In terms of assembly, homodimer.

Its subcellular location is the cytoplasm. It carries out the reaction (2S,6S)-2,6-diaminopimelate = meso-2,6-diaminopimelate. The protein operates within amino-acid biosynthesis; L-lysine biosynthesis via DAP pathway; DL-2,6-diaminopimelate from LL-2,6-diaminopimelate: step 1/1. Functionally, catalyzes the stereoinversion of LL-2,6-diaminopimelate (L,L-DAP) to meso-diaminopimelate (meso-DAP), a precursor of L-lysine and an essential component of the bacterial peptidoglycan. The chain is Diaminopimelate epimerase from Nitrosomonas eutropha (strain DSM 101675 / C91 / Nm57).